The primary structure comprises 202 residues: Probable adenylyl-sulfate kinase (202 aa).

Gly-36–Ser-43 serves as a coordination point for ATP. Residue Ser-110 is the Phosphoserine intermediate of the active site.

This sequence belongs to the APS kinase family.

It catalyses the reaction adenosine 5'-phosphosulfate + ATP = 3'-phosphoadenylyl sulfate + ADP + H(+). The protein operates within sulfur metabolism; hydrogen sulfide biosynthesis; sulfite from sulfate: step 2/3. Functionally, catalyzes the synthesis of activated sulfate. The polypeptide is Probable adenylyl-sulfate kinase (Halalkalibacterium halodurans (strain ATCC BAA-125 / DSM 18197 / FERM 7344 / JCM 9153 / C-125) (Bacillus halodurans)).